Here is a 95-residue protein sequence, read N- to C-terminus: Small ribosomal subunit protein uS17 (95 aa).

This sequence belongs to the universal ribosomal protein uS17 family. Part of the 30S ribosomal subunit.

One of the primary rRNA binding proteins, it binds specifically to the 5'-end of 16S ribosomal RNA. This Streptomyces coelicolor (strain ATCC BAA-471 / A3(2) / M145) protein is Small ribosomal subunit protein uS17.